The chain runs to 533 residues: MIMSGFHIGIYTSICLYIPLPHLEPWIISSHTPKNLNLLDCLLYCSVASYTAIAYKFCTARLIQSERTRENIMGGKLLPAAAFAGSAPPLSQVATSAAHGEDSPYFAGWKAYDEDPYHAVDNPDGVIQMGLAENQVSFDLLEAYLRDHPEAAGWSTGGAGAGSFRDNALFQDYHGLKSFRKAMASFMGKIRGGKARFDPDHIVLTAGATAANELLTFILANPGDALLIPTPYYPGFDRDLRWRTGVNIVPVRCDSANGFQVTVAALQAAYDEAAAVGMRARAVLITNPSNPLGTTVRRKMLDDILDFVSRNDIHLISDEIYSGSVFAAPDLVSVAELVEARGGDGIAGRVHIVYSLSKDLGLPGFRVGVVYSYNDAVVTAARRMSSFTLVSSQTQKTLAAMLSDEAFAGEYIRTNRRRLRERHEHVVAGLARAGVPCLRGNAGLFVWMDMRRLLLGGGGVGGELRLWEKLLRQAKLNISPGSSCHCSEAGWFRVCFANMSLDTLDLALHRISRFMDTWNGTKQQASCQQQEQQ.

At Lys358 the chain carries N6-(pyridoxal phosphate)lysine.

It belongs to the class-I pyridoxal-phosphate-dependent aminotransferase family. Pyridoxal 5'-phosphate serves as cofactor. As to expression, expressed in shoots and leaf blades. Expressed at low levels in leaf sheaths. Expressed in vasculature of roots and shoots.

It catalyses the reaction S-adenosyl-L-methionine = 1-aminocyclopropane-1-carboxylate + S-methyl-5'-thioadenosine + H(+). It functions in the pathway alkene biosynthesis; ethylene biosynthesis via S-adenosyl-L-methionine; ethylene from S-adenosyl-L-methionine: step 1/2. In terms of biological role, catalyzes the formation of 1-aminocyclopropane-1-carboxylate, a direct precursor of ethylene in higher plants. In Oryza sativa subsp. japonica (Rice), this protein is 1-aminocyclopropane-1-carboxylate synthase 5.